Consider the following 970-residue polypeptide: Sodium/calcium exchanger 1 (970 aa).

The N-terminal stretch at 1–32 is a signal peptide; the sequence is MLRLSLSPTYSLGFHLLAMMTLLISHVDHITA. Residues 33-71 lie on the Extracellular side of the membrane; it reads ETEMVEEGNETGECTGSYYCKKGVILPIWEPQDPSFGDK. An N-linked (GlcNAc...) asparagine glycan is attached at Asn-41. Residues 72–92 form a helical membrane-spanning segment; it reads IARATVYFVAMVYMFLGVSII. At 93-133 the chain is on the cytoplasmic side; sequence ADRFMSSIEVITSQEKEITIKKPNGETTKTTVRIWNETVSN. The chain crosses the membrane as a helical span at residues 134-154; that stretch reads LTLMALGSSAPEILLSVIEVC. The stretch at 138-178 is one Alpha-1 repeat; that stretch reads ALGSSAPEILLSVIEVCGHNFTAGDLGPSTIVGSAAFNMFI. At 155–167 the chain is on the extracellular side; it reads GHNFTAGDLGPST. The N-linked (GlcNAc...) asparagine glycan is linked to Asn-157. Residues 168–188 form a helical membrane-spanning segment; sequence IVGSAAFNMFIIIALCVYVVP. Over 189–201 the chain is Cytoplasmic; it reads DGETRKIKHLRVF. Residues 202 to 222 form a helical membrane-spanning segment; it reads FVTAAWSIFAYTWLYIILSVI. At 223 to 228 the chain is on the extracellular side; sequence SPGVVE. The chain crosses the membrane as a helical span at residues 229 to 249; sequence VWEGLLTFFFFPICVVFAWVA. The Cytoplasmic segment spans residues 250–797; the sequence is DRRLLFYKYV…FVPPTEYWNG (548 aa). The putative calmodulin-binding region stretch occupies residues 251–270; it reads RRLLFYKYVYKRYRAGKQRG. A phosphoserine mark is found at Ser-282 and Ser-389. Calx-beta domains lie at 393 to 493 and 524 to 624; these read VNTE…VHLS and ATVT…LEIG. Residues Glu-417, Asp-453, Asp-478, Asp-479, Ile-481, Glu-483, Glu-486, Asp-530, Asp-531, Asp-532, Glu-548, Asp-584, Asp-610, Glu-611, Glu-612, and Glu-715 each contribute to the Ca(2+) site. A helical membrane pass occupies residues 798 to 818; the sequence is WACFIVSILMIGLLTAFIGDL. The Extracellular segment spans residues 819 to 821; it reads ASH. Residues 822-842 traverse the membrane as a helical segment; it reads FGCTIGLKDSVTAVVFVALGT. The Alpha-2 repeat unit spans residues 839 to 875; sequence ALGTSVPDTFASKVAATQDQYADASIGNVTGSNAVNV. Residues 843–871 are Cytoplasmic-facing; that stretch reads SVPDTFASKVAATQDQYADASIGNVTGSN. A helical membrane pass occupies residues 872-892; the sequence is AVNVFLGIGVAWSIAAIYHAA. The Extracellular portion of the chain corresponds to 893–903; sequence NGEQFKVSPGT. A helical transmembrane segment spans residues 904-924; sequence LAFSVTLFTIFAFINVGVLLY. Residues 925–941 lie on the Cytoplasmic side of the membrane; that stretch reads RRRPEIGGELGGPRTAK. The chain crosses the membrane as a helical span at residues 942–962; it reads LLTSCLFVLLWLLYIFFSSLE. Residues 963 to 970 lie on the Extracellular side of the membrane; sequence AYCHIKGF.

It belongs to the Ca(2+):cation antiporter (CaCA) (TC 2.A.19) family. SLC8 subfamily.

The protein localises to the cell membrane. It catalyses the reaction Ca(2+)(in) + 3 Na(+)(out) = Ca(2+)(out) + 3 Na(+)(in). With respect to regulation, activated by micromolar levels of Ca(2+). Its function is as follows. Mediates the exchange of one Ca(2+) ion against three to four Na(+) ions across the cell membrane, and thereby contributes to the regulation of cytoplasmic Ca(2+) levels and Ca(2+)-dependent cellular processes. Contributes to Ca(2+) transport during excitation-contraction coupling in muscle. In a first phase, voltage-gated channels mediate the rapid increase of cytoplasmic Ca(2+) levels due to release of Ca(2+) stores from the endoplasmic reticulum. SLC8A1 mediates the export of Ca(2+) from the cell during the next phase, so that cytoplasmic Ca(2+) levels rapidly return to baseline. Required for normal embryonic heart development and the onset of heart contractions. In Cavia porcellus (Guinea pig), this protein is Sodium/calcium exchanger 1 (SLC8A1).